We begin with the raw amino-acid sequence, 381 residues long: L-lactate dehydrogenase (381 aa).

Residues 1 to 380 (MIISASTDYR…TRDSLVRELG (380 aa)) enclose the FMN hydroxy acid dehydrogenase domain. Position 24 (tyrosine 24) interacts with substrate. 2 residues coordinate FMN: serine 106 and glutamine 127. A substrate-binding site is contributed by tyrosine 129. Position 155 (threonine 155) interacts with FMN. Arginine 164 contacts substrate. Lysine 251 is a binding site for FMN. Histidine 275 functions as the Proton acceptor in the catalytic mechanism. Arginine 278 is a binding site for substrate. 306-330 (DSGIRSGLDVVRMIALGADTVLIGR) serves as a coordination point for FMN.

It belongs to the FMN-dependent alpha-hydroxy acid dehydrogenase family. In terms of assembly, homotetramer. The cofactor is FMN.

It is found in the cell inner membrane. The enzyme catalyses (S)-lactate + A = pyruvate + AH2. Functionally, catalyzes the conversion of L-lactate to pyruvate. Is coupled to the respiratory chain. The polypeptide is L-lactate dehydrogenase (Pseudomonas putida (strain ATCC 700007 / DSM 6899 / JCM 31910 / BCRC 17059 / LMG 24140 / F1)).